Here is a 506-residue protein sequence, read N- to C-terminus: GMP synthase [glutamine-hydrolyzing] (506 aa).

The 189-residue stretch at 2–190 folds into the Glutamine amidotransferase type-1 domain; sequence SIVILDFGSQ…FLDICGVTRD (189 aa). Cys-79 functions as the Nucleophile in the catalytic mechanism. Residues His-165 and Glu-167 contribute to the active site. The 191-residue stretch at 191–381 folds into the GMPS ATP-PPase domain; the sequence is WNAEHIVDEL…LGLPDHIRMR (191 aa). An ATP-binding site is contributed by 219 to 225; it reads SGGVDSS.

As to quaternary structure, homodimer.

The catalysed reaction is XMP + L-glutamine + ATP + H2O = GMP + L-glutamate + AMP + diphosphate + 2 H(+). It functions in the pathway purine metabolism; GMP biosynthesis; GMP from XMP (L-Gln route): step 1/1. In terms of biological role, catalyzes the synthesis of GMP from XMP. The sequence is that of GMP synthase [glutamine-hydrolyzing] (guaA) from Deinococcus radiodurans (strain ATCC 13939 / DSM 20539 / JCM 16871 / CCUG 27074 / LMG 4051 / NBRC 15346 / NCIMB 9279 / VKM B-1422 / R1).